The primary structure comprises 403 residues: D-mannonate dehydratase Caul1427 (403 aa).

Substrate is bound by residues asparagine 38 and histidine 123. The Proton donor/acceptor role is filled by tyrosine 160. Aspartate 211 contributes to the Mg(2+) binding site. Catalysis depends on histidine 213, which acts as the Proton donor/acceptor. Mg(2+)-binding residues include glutamate 237 and glutamate 263. Residues glutamate 263, arginine 284, histidine 313, aspartate 317, and glutamate 340 each contribute to the substrate site.

The protein belongs to the mandelate racemase/muconate lactonizing enzyme family. GalD subfamily. The cofactor is Mg(2+).

The enzyme catalyses D-mannonate = 2-dehydro-3-deoxy-D-gluconate + H2O. Its pathway is carbohydrate metabolism; pentose and glucuronate interconversion. In terms of biological role, catalyzes the dehydration of D-mannonate. Has no detectable activity with a panel of 70 other acid sugars (in vitro). This chain is D-mannonate dehydratase Caul1427, found in Caulobacter sp. (strain K31).